We begin with the raw amino-acid sequence, 72 residues long: UPF0270 protein YheU (72 aa).

The protein belongs to the UPF0270 family.

In Salmonella choleraesuis (strain SC-B67), this protein is UPF0270 protein YheU.